Reading from the N-terminus, the 489-residue chain is Serine/threonine-protein kinase BSK3 (489 aa).

Gly-2 carries the N-myristoyl glycine lipid modification. The Protein kinase domain occupies 58-324; that stretch reads EYIVSEHGEK…ETEVLSHVLM (267 aa). ATP is bound by residues 64 to 72 and Lys-86; that span reads HGEKAPNVV. Catalysis depends on Asp-180, which acts as the Proton acceptor. At Ser-212 the chain carries Phosphoserine.

Belongs to the protein kinase superfamily. Ser/Thr protein kinase family. Interacts with BRI1. Post-translationally, phosphorylated by BRI1 upon brassinolide (BL) treatment. Phosphorylated by ASK7/BIN2 and ASK9/BIL2.

The protein localises to the cell membrane. It carries out the reaction L-seryl-[protein] + ATP = O-phospho-L-seryl-[protein] + ADP + H(+). It catalyses the reaction L-threonyl-[protein] + ATP = O-phospho-L-threonyl-[protein] + ADP + H(+). Probable serine/threonine kinase that acts as a positive regulator of brassinosteroid (BR) signaling downstream of the receptor kinase BRI1. Mediates signal transduction from BRI1 by functioning as substrate of BRI1. Functions redundantly with BSK4, BSK6, BSK7 and BSK8. The polypeptide is Serine/threonine-protein kinase BSK3 (Arabidopsis thaliana (Mouse-ear cress)).